Here is a 380-residue protein sequence, read N- to C-terminus: Cytochrome b (380 aa).

4 helical membrane-spanning segments follow: residues 34–54 (FGSL…LLAM), 78–99 (WLIR…FLHI), 114–134 (WNTG…GYVL), and 179–199 (FFAL…VHLT). Residues His84 and His98 each coordinate heme b. Heme b-binding residues include His183 and His197. His202 is an a ubiquinone binding site. A run of 4 helical transmembrane segments spans residues 227-247 (LKDI…ALFS), 289-309 (LGGV…PFLH), 321-341 (LSQT…WIGS), and 348-368 (FMII…ILFP).

It belongs to the cytochrome b family. In terms of assembly, the cytochrome bc1 complex contains 11 subunits: 3 respiratory subunits (MT-CYB, CYC1 and UQCRFS1), 2 core proteins (UQCRC1 and UQCRC2) and 6 low-molecular weight proteins (UQCRH/QCR6, UQCRB/QCR7, UQCRQ/QCR8, UQCR10/QCR9, UQCR11/QCR10 and a cleavage product of UQCRFS1). This cytochrome bc1 complex then forms a dimer. It depends on heme b as a cofactor.

It is found in the mitochondrion inner membrane. Its function is as follows. Component of the ubiquinol-cytochrome c reductase complex (complex III or cytochrome b-c1 complex) that is part of the mitochondrial respiratory chain. The b-c1 complex mediates electron transfer from ubiquinol to cytochrome c. Contributes to the generation of a proton gradient across the mitochondrial membrane that is then used for ATP synthesis. The protein is Cytochrome b (MT-CYB) of Gallus lafayettii (Sri Lanka junglefowl).